Reading from the N-terminus, the 501-residue chain is Calcium-dependent protein kinase 4 (501 aa).

The 259-residue stretch at 25–283 (YLLGKKLGQG…AHEALCHPWI (259 aa)) folds into the Protein kinase domain. ATP is bound by residues 31-39 (LGQGQFGTT) and Lys54. Asp149 functions as the Proton acceptor in the catalytic mechanism. Ser189 is modified (phosphoserine). Positions 289-319 (APDKPLDPAVLSRLKQFSQMNKIKKMALRVI) are autoinhibitory domain. 4 consecutive EF-hand domains span residues 326-361 (EEIGGLKELFKMIDTDNSGTITFEELKAGLKRVGSE), 362-397 (LMESEIKSLMDAADIDNSGTIDYGEFLAATLHINKM), 398-433 (EREENLVVAFSYFDKDGSGYITIDELQQACTEFGLC), and 437-467 (LDDMIKEIDLDNDGKIDFSEFTAMMKKGDGV). The Ca(2+) site is built by Asp339, Asp341, Ser343, Thr345, Glu350, Asp375, Asp377, Ser379, Thr381, Glu386, Asp411, Asp413, Ser415, Tyr417, Glu422, Asp445, Asp447, Asp449, Lys451, and Glu456.

It belongs to the protein kinase superfamily. Ser/Thr protein kinase family. CDPK subfamily. Interacts with Di19.

It is found in the cytoplasm. The protein localises to the nucleus. It catalyses the reaction L-seryl-[protein] + ATP = O-phospho-L-seryl-[protein] + ADP + H(+). The enzyme catalyses L-threonyl-[protein] + ATP = O-phospho-L-threonyl-[protein] + ADP + H(+). Activated by calcium. Autophosphorylation may play an important role in the regulation of the kinase activity. May play a role in signal transduction pathways that involve calcium as a second messenger. Functions as a regulator of the calcium-mediated abscisic acid (ABA) signaling pathway. Phosphorylates ABA-responsive transcription factors ABF1 and ABF4 in vitro. Phosphorylates the nuclear zinc finger Di19 in vitro. The protein is Calcium-dependent protein kinase 4 (CPK4) of Arabidopsis thaliana (Mouse-ear cress).